A 95-amino-acid polypeptide reads, in one-letter code: Pyruvate dehydrogenase inhibitor (95 aa).

This sequence belongs to the HesB/IscA family. Interacts with the E1 module of pyruvate dehydrogenase (PdhA-PdhB).

Acts as an inhibitor of the pyruvate dehydrogenase. Overexpression does not affect growth with glucose as the main carbon source, but it leads to a dramatic growth defect when cells are grown with pyruvate as the sole carbon source. The polypeptide is Pyruvate dehydrogenase inhibitor (Bacillus subtilis (strain 168)).